The following is a 462-amino-acid chain: GTPase Der (462 aa).

2 consecutive EngA-type G domains span residues 3–166 (PVIA…ITEM) and 175–348 (IKIA…HSAI). Residues 9–16 (GRPNVGKS), 56–60 (DTGGI), 118–121 (NKTD), 181–188 (GRPNVGKS), 228–232 (DTAGV), and 293–296 (NKWD) each bind GTP. A KH-like domain is found at 349 to 433 (QSFSTPKLTR…PLKIEFKGGQ (85 aa)).

The protein belongs to the TRAFAC class TrmE-Era-EngA-EngB-Septin-like GTPase superfamily. EngA (Der) GTPase family. In terms of assembly, associates with the 50S ribosomal subunit.

In terms of biological role, GTPase that plays an essential role in the late steps of ribosome biogenesis. This is GTPase Der from Legionella pneumophila (strain Lens).